We begin with the raw amino-acid sequence, 279 residues long: Tryptophan synthase alpha chain (279 aa).

Active-site proton acceptor residues include Glu50 and Asp61.

The protein belongs to the TrpA family. In terms of assembly, tetramer of two alpha and two beta chains.

The enzyme catalyses (1S,2R)-1-C-(indol-3-yl)glycerol 3-phosphate + L-serine = D-glyceraldehyde 3-phosphate + L-tryptophan + H2O. The protein operates within amino-acid biosynthesis; L-tryptophan biosynthesis; L-tryptophan from chorismate: step 5/5. Functionally, the alpha subunit is responsible for the aldol cleavage of indoleglycerol phosphate to indole and glyceraldehyde 3-phosphate. The protein is Tryptophan synthase alpha chain of Allorhizobium ampelinum (strain ATCC BAA-846 / DSM 112012 / S4) (Agrobacterium vitis (strain S4)).